A 64-amino-acid chain; its full sequence is SPbeta prophage-derived uncharacterized protein YopV (64 aa).

This chain is SPbeta prophage-derived uncharacterized protein YopV (yopV), found in Bacillus subtilis (strain 168).